The chain runs to 376 residues: Alpha-ketoglutarate-dependent dioxygenase esdpJ (376 aa).

The Fe cation site is built by His-145 and Asp-147. Thr-202 is a 2-oxoglutarate binding site. The tract at residues 234–260 is disordered; it reads YNQSSQEKKSEIHVEPRGSPNNVGSDL. Positions 239–249 are enriched in basic and acidic residues; that stretch reads QEKKSEIHVEP. His-335 contacts Fe cation. Residues Arg-347 and Arg-351 each contribute to the 2-oxoglutarate site. Positions 354–376 are disordered; sequence GVGEQPYLDPESKTRREALGEFN. A compositionally biased stretch (basic and acidic residues) spans 363–376; sequence PESKTRREALGEFN.

The protein belongs to the TfdA dioxygenase family. The cofactor is Fe(2+).

In terms of biological role, alpha-ketoglutarate-dependent dioxygenas; part of the cluster that mediates the biosynthesis of shearones, diterpenoid pyrones (DPs) which are structurally diverse meroterpenoids consisting of a diterpene linked by a pyrone, and which may exhibit a range of bioactivities. The alpha-ketoglutarate-dependent dioxygenase esdpJ seems not to be involved in this pathway. The molecular scaffold is commonly biosynthesized by a series of enzymes including the non-reducing polyketide synthase (NR-PKS) esdpA that generates an alpha-pyrone; the prenyltransferase esdpC that attaches a geranylgeranyl pyrophosphate (GGPP) produced by the GGPP synthase (GGPPS) esdpD onto the pyrone unit; the FAD-dependent monooxygenase esdpE that converts an olefin on the diterpene unit into an epoxide; and the terpene cyclase esdpB that catalyzes the cyclization reactions to give the molecular backbone shearone A. In the modification steps, esdpF oxidizes the hydroxy group to a ketone at C-3 and esdpG then attaches hydroxy groups at both C-11 and C-12. After that, esdpI hydroxylates at C-20 and esdpH hydroxylates at C-6'. The ether bridge is generated by nucleophilic attack of the hydroxy group at C-20 to the carbonyl carbon at C-3. EsdpH can also functions prior to esdpI. The different combinations of these modification enzymes lead to the production of diverse shearone derivatives, shearone I being the end product of the pathway. This Penicillium shearii (Eupenicillium shearii) protein is Alpha-ketoglutarate-dependent dioxygenase esdpJ.